The following is a 190-amino-acid chain: Elongation factor P-like protein (190 aa).

The protein belongs to the elongation factor P family.

This Citrobacter koseri (strain ATCC BAA-895 / CDC 4225-83 / SGSC4696) protein is Elongation factor P-like protein.